The sequence spans 102 residues: MKIVVVGGGTSGLLSALALEKEGHDVLVLEKDKVGGLCRSENIDGYTVDIGVHAITMLNDGPLTRLLNNYARYIPNFREYGDYYVRTDKLQKIPVSMNEWMT.

This is an uncharacterized protein from Methanothermococcus thermolithotrophicus (Methanococcus thermolithotrophicus).